A 160-amino-acid polypeptide reads, in one-letter code: Serine-protein kinase RsbW (160 aa).

In terms of assembly, homodimer. In stressed cells, forms a complex with RsbV. The predominant form of this complex has a stoichiometry of 2:2 (one dimer of RsbW is bound by two monomers of RsbV). In unstressed cells, forms a 2:1 complex with sigma-B.

The enzyme catalyses L-seryl-[protein] + ATP = O-phospho-L-seryl-[protein] + ADP + H(+). The catalysed reaction is L-threonyl-[protein] + ATP = O-phospho-L-threonyl-[protein] + ADP + H(+). With respect to regulation, the higher affinity of RsbW for RsbV than for sigma-B, rather than a difference in the concentrations of RsbV and sigma-B, is the driving force that is responsible for the switch of RsbW to non-phosphorylated RsbV. The kinase activity of RsbW is directly regulated by changes in the ATP/ADP ratio. Its function is as follows. Negative regulator of sigma-B activity. Phosphorylates and inactivates its specific antagonist protein, RsbV. Upon phosphorylation of RsbV, RsbW is released and binds to sigma-B, thereby blocking its ability to form an RNA polymerase holoenzyme (E-sigma-B). The protein is Serine-protein kinase RsbW (rsbW) of Bacillus subtilis (strain 168).